The sequence spans 554 residues: 3-(3-hydroxy-phenyl)propionate/3-hydroxycinnamic acid hydroxylase (554 aa).

FAD-binding positions include 17-46 (QVAI…LVEK) and 285-295 (FRIDRVLLAGD).

Belongs to the PheA/TfdB FAD monooxygenase family. Requires FAD as cofactor.

It carries out the reaction 3-(3-hydroxyphenyl)propanoate + NADH + O2 + H(+) = 3-(2,3-dihydroxyphenyl)propanoate + NAD(+) + H2O. It catalyses the reaction (2E)-3-(3-hydroxyphenyl)prop-2-enoate + NADH + O2 + H(+) = (2E)-3-(2,3-dihydroxyphenyl)prop-2-enoate + NAD(+) + H2O. It participates in aromatic compound metabolism; 3-phenylpropanoate degradation. In terms of biological role, catalyzes the insertion of one atom of molecular oxygen into position 2 of the phenyl ring of 3-(3-hydroxyphenyl)propionate (3-HPP) and hydroxycinnamic acid (3HCI). The chain is 3-(3-hydroxy-phenyl)propionate/3-hydroxycinnamic acid hydroxylase from Klebsiella pneumoniae (strain 342).